A 144-amino-acid chain; its full sequence is Large ribosomal subunit protein uL15 (144 aa).

The disordered stretch occupies residues 1–56 (MELNTLAPAPGAKSSKKRVGRGIGSGLGKTGGRGHKGQKSRSGGSVKPGFEGGQMP). Positions 21 to 31 (RGIGSGLGKTG) are enriched in gly residues.

It belongs to the universal ribosomal protein uL15 family. Part of the 50S ribosomal subunit.

In terms of biological role, binds to the 23S rRNA. The sequence is that of Large ribosomal subunit protein uL15 from Idiomarina loihiensis (strain ATCC BAA-735 / DSM 15497 / L2-TR).